A 77-amino-acid polypeptide reads, in one-letter code: NADH dehydrogenase [ubiquinone] 1 alpha subcomplex subunit 3 (77 aa).

Residues 23–45 form a helical membrane-spanning segment; sequence IVGGSALALAGIVMATIGVANYY.

Belongs to the complex I NDUFA3 subunit family. Complex I is composed of 43 different subunits.

The protein resides in the mitochondrion inner membrane. It localises to the cytoplasm. The protein localises to the myofibril. It is found in the sarcomere. Its subcellular location is the z line. Functionally, accessory subunit of the mitochondrial membrane respiratory chain NADH dehydrogenase (Complex I), that is believed not to be involved in catalysis. Complex I functions in the transfer of electrons from NADH to the respiratory chain. The immediate electron acceptor for the enzyme is believed to be ubiquinone. Required for the maintenance of muscle integrity and for cell proliferation in the wing imaginal disc epithelium, possibly by interacting with the chaperone-assisted selective autophagy (CASA) pathway. This Drosophila melanogaster (Fruit fly) protein is NADH dehydrogenase [ubiquinone] 1 alpha subcomplex subunit 3.